A 132-amino-acid chain; its full sequence is Small ribosomal subunit protein uS8 (132 aa).

This sequence belongs to the universal ribosomal protein uS8 family. As to quaternary structure, part of the 30S ribosomal subunit. Contacts proteins S5 and S12.

In terms of biological role, one of the primary rRNA binding proteins, it binds directly to 16S rRNA central domain where it helps coordinate assembly of the platform of the 30S subunit. This chain is Small ribosomal subunit protein uS8, found in Bifidobacterium longum (strain NCC 2705).